The primary structure comprises 563 residues: Arginine--tRNA ligase (563 aa).

The 'HIGH' region signature appears at 121-131; it reads PNIAKPFSIGH.

This sequence belongs to the class-I aminoacyl-tRNA synthetase family. In terms of assembly, monomer.

It is found in the cytoplasm. The catalysed reaction is tRNA(Arg) + L-arginine + ATP = L-arginyl-tRNA(Arg) + AMP + diphosphate. The chain is Arginine--tRNA ligase from Streptococcus agalactiae serotype Ia (strain ATCC 27591 / A909 / CDC SS700).